The sequence spans 333 residues: tRNA(Ile)-lysidine synthase (333 aa).

25 to 30 is a binding site for ATP; sequence SGGPDS.

The protein belongs to the tRNA(Ile)-lysidine synthase family.

The protein localises to the cytoplasm. It catalyses the reaction cytidine(34) in tRNA(Ile2) + L-lysine + ATP = lysidine(34) in tRNA(Ile2) + AMP + diphosphate + H(+). Its function is as follows. Ligates lysine onto the cytidine present at position 34 of the AUA codon-specific tRNA(Ile) that contains the anticodon CAU, in an ATP-dependent manner. Cytidine is converted to lysidine, thus changing the amino acid specificity of the tRNA from methionine to isoleucine. The sequence is that of tRNA(Ile)-lysidine synthase from Ureaplasma parvum serovar 3 (strain ATCC 700970).